Consider the following 482-residue polypeptide: DNA-directed RNA polymerase I subunit RPA49 (482 aa).

Ser-226 carries the phosphoserine modification. N6-acetyllysine is present on Lys-436. The tract at residues 460–482 is disordered; sequence GTLSVPLPPAQNSDRQSKRRKMN.

Belongs to the eukaryotic RPA49/POLR1E RNA polymerase subunit family. As to quaternary structure, component of the RNA polymerase I (Pol I) complex consisting of 13 subunits: a ten-subunit catalytic core composed of POLR1A/RPA1, POLR1B/RPA2, POLR1C/RPAC1, POLR1D/RPAC2, POLR1H/RPA12, POLR2E/RPABC1, POLR2F/RPABC2, POLR2H/RPABC3, POLR2K/RPABC4 and POLR2L/RPABC5; a mobile stalk subunit POLR1F/RPA43 protruding from the core and additional subunits homologous to general transcription factors POLR1E/RPA49 and POLR1G/RPA34. Forms a heterodimer with POLR1G/RPA34. Interacts with POLR1G. Also binds UBTF/UBF. Interacts with PWP1. In terms of processing, acetylated at Lys-436 by CREBBP/CBP, leading to decreased RNA polymerase I transcription. In normal conditions, deacetylated by SIRT7, promoting the association of RNA polymerase I with the rDNA promoter region and coding region. In response to stress, SIRT7 is released from nucleoli leading to hyperacetylation of POLR1E/PAF53 and decreased association of RNA polymerase I with the rDNA promoter region.

The protein localises to the nucleus. It localises to the nucleolus. Functionally, component of RNA polymerase I (Pol I), a DNA-dependent RNA polymerase which synthesizes ribosomal RNA precursors using the four ribonucleoside triphosphates as substrates. Appears to be involved in the formation of the initiation complex at the promoter by mediating the interaction between Pol I and UBTF/UBF. This chain is DNA-directed RNA polymerase I subunit RPA49 (Polr1e), found in Mus musculus (Mouse).